The sequence spans 228 residues: MTDALLRCKELSKSYQDGGDQVTVLKDIDFALQAGEMVAVVGASGSGKSTLLHLLGGLDKPSSGQLFYKDQEMTPWKADKLAQWRNQNLGFVYQFHHLLPEFSALENVAMPQMIAGKSPTEAKQQAEQLLVRVGLEHRLSHRPAQLSGGERQRVAIARAFVNKPQVVLADEPTGNLDGEAAESIYQLMLELNQEMGTAFIVVTHDLQLAEQLQRVEVLKNGILHKEQG.

The ABC transporter domain maps to 6–228 (LRCKELSKSY…KNGILHKEQG (223 aa)). 42 to 49 (GASGSGKS) serves as a coordination point for ATP.

The protein belongs to the ABC transporter superfamily. Lipoprotein translocase (TC 3.A.1.125) family. As to quaternary structure, the complex is composed of two ATP-binding proteins (LolD) and two transmembrane proteins (LolC and LolE).

The protein localises to the cell inner membrane. In terms of biological role, part of the ABC transporter complex LolCDE involved in the translocation of mature outer membrane-directed lipoproteins, from the inner membrane to the periplasmic chaperone, LolA. Responsible for the formation of the LolA-lipoprotein complex in an ATP-dependent manner. This Idiomarina loihiensis (strain ATCC BAA-735 / DSM 15497 / L2-TR) protein is Lipoprotein-releasing system ATP-binding protein LolD.